The sequence spans 182 residues: Translation initiation factor IF-3, chloroplastic (182 aa).

This sequence belongs to the IF-3 family. As to quaternary structure, monomer.

The protein localises to the plastid. It localises to the chloroplast. In terms of biological role, IF-3 binds to the 30S ribosomal subunit and shifts the equilibrium between 70S ribosomes and their 50S and 30S subunits in favor of the free subunits, thus enhancing the availability of 30S subunits on which protein synthesis initiation begins. This Porphyra purpurea (Red seaweed) protein is Translation initiation factor IF-3, chloroplastic.